The primary structure comprises 274 residues: Cytochrome b-c1 complex subunit Rieske, mitochondrial (274 aa).

Residues 79–103 (SHTDVKVPDFSEYRRPEVLDSTKSS) lie on the Mitochondrial matrix side of the membrane. A helical transmembrane segment spans residues 104-140 (RESSEARKGFSYLVTAVTTVGVAYAAKNAVTQFVSSM). The Mitochondrial intermembrane portion of the chain corresponds to 141-274 (SASADVLALA…FTSDDMVIVG (134 aa)). The 86-residue stretch at 187 to 272 (EAAVELSQLR…YEFTSDDMVI (86 aa)) folds into the Rieske domain. 5 residues coordinate [2Fe-2S] cluster: Cys217, His219, Cys236, His239, and Ser241. A disulfide bond links Cys222 and Cys238.

This sequence belongs to the Rieske iron-sulfur protein family. In terms of assembly, component of the ubiquinol-cytochrome c oxidoreductase (cytochrome b-c1 complex, complex III, CIII), a multisubunit enzyme composed of 11 subunits. The complex is composed of 3 respiratory subunits cytochrome b, cytochrome c1 and Rieske protein UQCRFS1, 2 core protein subunits UQCRC1/QCR1 and UQCRC2/QCR2, and 6 low-molecular weight protein subunits UQCRH/QCR6, UQCRB/QCR7, UQCRQ/QCR8, UQCR10/QCR9, UQCR11/QCR10 and subunit 9, the cleavage product of Rieske protein UQCRFS1. The complex exists as an obligatory dimer and forms supercomplexes (SCs) in the inner mitochondrial membrane with NADH-ubiquinone oxidoreductase (complex I, CI) and cytochrome c oxidase (complex IV, CIV), resulting in different assemblies (supercomplex SCI(1)III(2)IV(1) and megacomplex MCI(2)III(2)IV(2)). Incorporation of the Rieske protein UQCRFS1 is the penultimate step in complex III assembly. Interacts with TTC19, which is involved in the clearance of UQCRFS1 fragments. As to quaternary structure, component of the ubiquinol-cytochrome c oxidoreductase (cytochrome b-c1 complex, complex III, CIII). Subunit 9 corresponds to the mitochondrial targeting sequence (MTS) of Rieske protein UQCRFS1. It is retained after processing and incorporated inside complex III, where it remains bound to the complex and localizes between the 2 core subunits UQCRC1/QCR1 and UQCRC2/QCR2. It depends on [2Fe-2S] cluster as a cofactor. Proteolytic processing is necessary for the correct insertion of UQCRFS1 in the complex III dimer. Several fragments are generated during UQCRFS1 insertion, most probably due to the endogenous matrix-processing peptidase (MPP) activity of the 2 core protein subunits UQCRC1/QCR1 and UQCRC2/QCR2, which are homologous to the 2 mitochondrial-processing peptidase (MPP) subunits beta-MPP and alpha-MPP respectively. The action of the protease is also necessary for the clearance of the UQCRFS1 fragments.

The protein resides in the mitochondrion inner membrane. The enzyme catalyses a quinol + 2 Fe(III)-[cytochrome c](out) = a quinone + 2 Fe(II)-[cytochrome c](out) + 2 H(+)(out). Functionally, component of the ubiquinol-cytochrome c oxidoreductase, a multisubunit transmembrane complex that is part of the mitochondrial electron transport chain which drives oxidative phosphorylation. The respiratory chain contains 3 multisubunit complexes succinate dehydrogenase (complex II, CII), ubiquinol-cytochrome c oxidoreductase (cytochrome b-c1 complex, complex III, CIII) and cytochrome c oxidase (complex IV, CIV), that cooperate to transfer electrons derived from NADH and succinate to molecular oxygen, creating an electrochemical gradient over the inner membrane that drives transmembrane transport and the ATP synthase. The cytochrome b-c1 complex catalyzes electron transfer from ubiquinol to cytochrome c, linking this redox reaction to translocation of protons across the mitochondrial inner membrane, with protons being carried across the membrane as hydrogens on the quinol. In the process called Q cycle, 2 protons are consumed from the matrix, 4 protons are released into the intermembrane space and 2 electrons are passed to cytochrome c. The Rieske protein is a catalytic core subunit containing a [2Fe-2S] iron-sulfur cluster. It cycles between 2 conformational states during catalysis to transfer electrons from the quinol bound in the Q(0) site in cytochrome b to cytochrome c1. Incorporation of UQCRFS1 is the penultimate step in complex III assembly. Its function is as follows. Component of the ubiquinol-cytochrome c oxidoreductase (cytochrome b-c1 complex, complex III, CIII). UQCRFS1 undergoes proteolytic processing once it is incorporated in the complex III dimer. One of the fragments, called subunit 9, corresponds to its mitochondrial targeting sequence (MTS). The proteolytic processing is necessary for the correct insertion of UQCRFS1 in the complex III dimer, but the persistence of UQCRFS1-derived fragments may prevent newly imported UQCRFS1 to be processed and assembled into complex III and is detrimental for the complex III structure and function. In Symphalangus syndactylus (Siamang), this protein is Cytochrome b-c1 complex subunit Rieske, mitochondrial (UQCRFS1).